A 119-amino-acid polypeptide reads, in one-letter code: Large ribosomal subunit protein uL18 (119 aa).

Belongs to the universal ribosomal protein uL18 family. Part of the 50S ribosomal subunit; part of the 5S rRNA/L5/L18/L25 subcomplex. Contacts the 5S and 23S rRNAs.

This is one of the proteins that bind and probably mediate the attachment of the 5S RNA into the large ribosomal subunit, where it forms part of the central protuberance. This is Large ribosomal subunit protein uL18 from Cereibacter sphaeroides (strain ATCC 17025 / ATH 2.4.3) (Rhodobacter sphaeroides).